We begin with the raw amino-acid sequence, 268 residues long: L-proline trans-4-hydroxylase (268 aa).

Histidine 113, aspartate 115, and histidine 218 together coordinate Fe cation.

The protein belongs to the PhyH family. In terms of assembly, monomer. Fe(2+) is required as a cofactor.

The catalysed reaction is L-proline + 2-oxoglutarate + O2 = trans-4-hydroxy-L-proline + succinate + CO2. It functions in the pathway antibiotic biosynthesis. With respect to regulation, competitively inhibited by pyridine-2,4-dicarboxylate. Inhibited by diethyl pyrocarbonate (DEPC), 3,4-dihydroxybenzoate, pyridine-2,5-dicarboxylate, alpha,alpha'-dipyridyl, and some metal ions such as Co(2+) and Zn(2+). In terms of biological role, involved in the biosynthesis of the peptidolactone antibiotic etamycin (viridogrisein). Catalyzes the hydroxylation of free L-proline at the C-4 position to yield trans-4-hydroxy-L-proline. This is L-proline trans-4-hydroxylase from Streptomyces griseoviridis.